We begin with the raw amino-acid sequence, 207 residues long: LexA repressor (207 aa).

Residues Val28–Glu48 constitute a DNA-binding region (H-T-H motif). Catalysis depends on for autocatalytic cleavage activity residues Ser129 and Lys167.

Belongs to the peptidase S24 family. Homodimer.

It catalyses the reaction Hydrolysis of Ala-|-Gly bond in repressor LexA.. Its function is as follows. Represses a number of genes involved in the response to DNA damage (SOS response), including recA and lexA. In the presence of single-stranded DNA, RecA interacts with LexA causing an autocatalytic cleavage which disrupts the DNA-binding part of LexA, leading to derepression of the SOS regulon and eventually DNA repair. The polypeptide is LexA repressor (Oceanobacillus iheyensis (strain DSM 14371 / CIP 107618 / JCM 11309 / KCTC 3954 / HTE831)).